The primary structure comprises 439 residues: 5-hydroxybenzimidazole synthase (439 aa).

Substrate is bound by residues Met96, Tyr125, His164, 187–189 (SKG), 228–231 (NGIR), and Glu267. His271 provides a ligand contact to Zn(2+). Tyr294 contacts substrate. Position 335 (His335) interacts with Zn(2+). Residues Cys410, Cys413, and Cys417 each contribute to the [4Fe-4S] cluster site.

This sequence belongs to the ThiC family. 5-hydroxybenzimidazole synthase subfamily. In terms of assembly, homodimer. Requires [4Fe-4S] cluster as cofactor.

It carries out the reaction 5-amino-1-(5-phospho-beta-D-ribosyl)imidazole + AH2 + S-adenosyl-L-methionine = 5-hydroxybenzimidazole + 5'-deoxyadenosine + formate + L-methionine + A + NH4(+) + phosphate + 2 H(+). Its function is as follows. Catalyzes the conversion of aminoimidazole ribotide (AIR) to 5-hydroxybenzimidazole (5-HBI) in a radical S-adenosyl-L-methionine (SAM)-dependent reaction. Is thus involved in the anaerobic biosynthesis of the benzimidazole lower axial ligand of the cobamide produced by D.autotrophicum. The sequence is that of 5-hydroxybenzimidazole synthase from Desulforapulum autotrophicum (strain ATCC 43914 / DSM 3382 / VKM B-1955 / HRM2) (Desulfobacterium autotrophicum).